We begin with the raw amino-acid sequence, 275 residues long: Large ribosomal subunit protein uL2 (275 aa).

Residues 223–275 (VAMNPVDHPHGGGEGRTGEAREPVSPWGTPSKGFKTRRNKRTNNMIVQRRKRK) are disordered. Positions 229–244 (DHPHGGGEGRTGEARE) are enriched in basic and acidic residues.

It belongs to the universal ribosomal protein uL2 family. In terms of assembly, part of the 50S ribosomal subunit. Forms a bridge to the 30S subunit in the 70S ribosome.

One of the primary rRNA binding proteins. Required for association of the 30S and 50S subunits to form the 70S ribosome, for tRNA binding and peptide bond formation. It has been suggested to have peptidyltransferase activity; this is somewhat controversial. Makes several contacts with the 16S rRNA in the 70S ribosome. The polypeptide is Large ribosomal subunit protein uL2 (Bordetella petrii (strain ATCC BAA-461 / DSM 12804 / CCUG 43448)).